A 469-amino-acid chain; its full sequence is 23S rRNA (uracil(1939)-C(5))-methyltransferase RlmD (469 aa).

The 59-residue stretch at 11 to 69 folds into the TRAM domain; sequence PKTSNQRLTVTVDKLDMNGVGVARWQNKPIFIAGVLPDEIVDVKVIEQKSKYARAKLIS. Residues Cys82, Cys88, Cys91, and Cys178 each coordinate [4Fe-4S] cluster. 6 residues coordinate S-adenosyl-L-methionine: Gln300, Phe329, Asn334, Glu350, Asp377, and Asp399. Cys425 serves as the catalytic Nucleophile.

Belongs to the class I-like SAM-binding methyltransferase superfamily. RNA M5U methyltransferase family. RlmD subfamily.

The catalysed reaction is uridine(1939) in 23S rRNA + S-adenosyl-L-methionine = 5-methyluridine(1939) in 23S rRNA + S-adenosyl-L-homocysteine + H(+). Its function is as follows. Catalyzes the formation of 5-methyl-uridine at position 1939 (m5U1939) in 23S rRNA. In Colwellia psychrerythraea (strain 34H / ATCC BAA-681) (Vibrio psychroerythus), this protein is 23S rRNA (uracil(1939)-C(5))-methyltransferase RlmD.